We begin with the raw amino-acid sequence, 878 residues long: Leucine--tRNA ligase (878 aa).

A 'HIGH' region motif is present at residues 43 to 53 (PYPSGRIHMGH). Positions 630–634 (KMSKS) match the 'KMSKS' region motif. Lysine 633 contributes to the ATP binding site.

It belongs to the class-I aminoacyl-tRNA synthetase family.

The protein localises to the cytoplasm. The catalysed reaction is tRNA(Leu) + L-leucine + ATP = L-leucyl-tRNA(Leu) + AMP + diphosphate. This is Leucine--tRNA ligase from Rhodopseudomonas palustris (strain BisB5).